The primary structure comprises 156 residues: Small ribosomal subunit protein uS7 (156 aa).

It belongs to the universal ribosomal protein uS7 family. As to quaternary structure, part of the 30S ribosomal subunit. Contacts proteins S9 and S11.

In terms of biological role, one of the primary rRNA binding proteins, it binds directly to 16S rRNA where it nucleates assembly of the head domain of the 30S subunit. Is located at the subunit interface close to the decoding center, probably blocks exit of the E-site tRNA. The polypeptide is Small ribosomal subunit protein uS7 (Clostridium perfringens (strain ATCC 13124 / DSM 756 / JCM 1290 / NCIMB 6125 / NCTC 8237 / Type A)).